A 349-amino-acid polypeptide reads, in one-letter code: Small ribosomal subunit protein uS2 (349 aa).

It belongs to the universal ribosomal protein uS2 family.

This chain is Small ribosomal subunit protein uS2, found in Methylocella silvestris (strain DSM 15510 / CIP 108128 / LMG 27833 / NCIMB 13906 / BL2).